The sequence spans 175 residues: ATP synthase subunit b (175 aa).

Residues 14 to 34 (LSPNPGLIFWTTVSFVIVLLI) traverse the membrane as a helical segment.

The protein belongs to the ATPase B chain family. In terms of assembly, F-type ATPases have 2 components, F(1) - the catalytic core - and F(0) - the membrane proton channel. F(1) has five subunits: alpha(3), beta(3), gamma(1), delta(1), epsilon(1). F(0) has four main subunits: a(1), b(2) and c(10-14). The alpha and beta chains form an alternating ring which encloses part of the gamma chain. F(1) is attached to F(0) by a central stalk formed by the gamma and epsilon chains, while a peripheral stalk is formed by the delta and b chains.

The protein resides in the cell inner membrane. Functionally, f(1)F(0) ATP synthase produces ATP from ADP in the presence of a proton or sodium gradient. F-type ATPases consist of two structural domains, F(1) containing the extramembraneous catalytic core and F(0) containing the membrane proton channel, linked together by a central stalk and a peripheral stalk. During catalysis, ATP synthesis in the catalytic domain of F(1) is coupled via a rotary mechanism of the central stalk subunits to proton translocation. Component of the F(0) channel, it forms part of the peripheral stalk, linking F(1) to F(0). The chain is ATP synthase subunit b from Chlorobium phaeobacteroides (strain DSM 266 / SMG 266 / 2430).